The primary structure comprises 359 residues: Fructose-bisphosphate aldolase (359 aa).

Serine 50 contributes to the D-glyceraldehyde 3-phosphate binding site. The active-site Proton donor is the aspartate 83. The Zn(2+) site is built by histidine 84, aspartate 105, glutamate 142, and histidine 198. Glycine 199 contacts dihydroxyacetone phosphate. Histidine 232 is a Zn(2+) binding site. Dihydroxyacetone phosphate is bound by residues 233–235 and 275–278; these read GSS and NIDT.

Zn(2+) is required as a cofactor.

The enzyme catalyses beta-D-fructose 1,6-bisphosphate = D-glyceraldehyde 3-phosphate + dihydroxyacetone phosphate. Its pathway is carbohydrate degradation; glycolysis; D-glyceraldehyde 3-phosphate and glycerone phosphate from D-glucose: step 4/4. Catalyzes the aldol condensation of dihydroxyacetone phosphate (DHAP or glycerone-phosphate) with glyceraldehyde 3-phosphate (G3P) to form fructose 1,6-bisphosphate (FBP) in gluconeogenesis and the reverse reaction in glycolysis. The sequence is that of Fructose-bisphosphate aldolase from Nostoc sp. (strain PCC 7120 / SAG 25.82 / UTEX 2576).